The sequence spans 197 residues: 22.7 kDa class IV heat shock protein (197 aa).

The signal sequence occupies residues 1–28; the sequence is MSLKPLNMLLVPFLLLILAADFPLKAKA. The sHSP domain occupies 68 to 184; it reads PSITLSHARV…GPRMVSIVEE (117 aa). The Prevents secretion from ER signature appears at 194–197; the sequence is DELK.

The protein belongs to the small heat shock protein (HSP20) family. In terms of assembly, forms oligomeric structures.

It is found in the endoplasmic reticulum lumen. The protein is 22.7 kDa class IV heat shock protein (HSP22.7) of Pisum sativum (Garden pea).